The following is a 976-amino-acid chain: MEYHCVLFTVLLQLIIQPGRSRPTITPEGPRLTVPLYSNFSLHCQSNSTVRWQHENRPMRTLKEEQRQGQQTILKVNRAGPQHLGKYSCREEKTGEKSSIYVYVKDPENPFRRTIVFDIVAAEGDTTVIPCLATDPDMKNLNLQKCDGQPLPNSLRYSASLETGVSVEKVRKEFEGCYVCVGTLDAATVKSGRYQLTVRLVPDAPPPITLGQPQRVLLTQGEKLSLSCSTSNVNSDIAVKWKAPNGVNPSVHQNSHLLTEPITHVRTAILSLSSVTMQDAGNYSCEAINEKGTTAKPVWVNIYEKGFINITSVDNSTRRVRAGESLSLRVVMNAYPKPHTFSWSYSGVKLTNTTDHVITSRTHGNSYTSELKLVRLKVSESGIYTFSCLNRDATIRQTFEVHVISKPQIVSYEGPIDGQVRCVAEGYPTPQIKWYYCDLPHSRCSNLLNATQEEEDVVTVTMTNPPFGKGAVESRLNITKNNYATLECVASANGEIVYTLFSISENTVPHELFTPLLIGFVAAAVILVLILIVLTYKYMQKPKYQIQWKVIEGIHGNNYVYIDPTQLPYDHQWEFPRDKLRFGKTLGSGAFGKVVEATAYGMSKADTVMTVAVKMLKPSAHATEKEALMSELKVLSYLGNHINIVNLLGACTVGGPTLVITEYCCFGDLLNFLRRRRVYFYYTTLGEDAYYRNVMMQSEPNDSRNGYMTMKPSVLGILSSENRRSLNKGDSYSDSDAVSEILQEDGLTLDTEDLLSFSYQVAKGMDFLASKNCIHRDLAARNILLTQGRVAKICDFGLARDITTDSNYVVKGNARLPVKWMSPESIFECVYTFESDVWSYGILLWEIFSLGSSPYPGMPVDSKFYKMIKEGYRMESPEFSPSEMYDIMHSCWDADPVKRPSFSKIVEKIEQQISDSTKHIYLNFSSRLPAAPGPREESSSHVHRLNSVGSHSTATQPLLSSNDVFLDRSSPSHPVV.

The N-terminal stretch at 1-21 is a signal peptide; the sequence is MEYHCVLFTVLLQLIIQPGRS. At 22–515 the chain is on the extracellular side; sequence RPTITPEGPR…NTVPHELFTP (494 aa). 5 consecutive Ig-like C2-type domains span residues 23–105, 100–199, 206–301, 308–402, and 399–504; these read PTIT…VYVK, IYVY…LTVR, PPIT…VWVN, INIT…FEVH, and FEVH…FSIS. N-linked (GlcNAc...) asparagine glycosylation is found at Asn-39 and Asn-47. 4 disulfides stabilise this stretch: Cys-44/Cys-89, Cys-131/Cys-180, Cys-146/Cys-177, and Cys-228/Cys-285. Asn-282, Asn-309, Asn-315, Asn-352, Asn-449, and Asn-477 each carry an N-linked (GlcNAc...) asparagine glycan. Cys-422 and Cys-488 are oxidised to a cystine. The helical transmembrane segment at 516-536 threads the bilayer; sequence LLIGFVAAAVILVLILIVLTY. The Cytoplasmic segment spans residues 537–976; sequence KYMQKPKYQI…DRSSPSHPVV (440 aa). Position 559 (Tyr-559) interacts with Mg(2+). Tyr-559 and Tyr-561 each carry phosphotyrosine; by autocatalysis. In terms of domain architecture, Protein kinase spans 580 to 922; the sequence is LRFGKTLGSG…ISDSTKHIYL (343 aa). ATP-binding positions include 587-594, Lys-614, and 662-668; these read GSGAFGKV and EYCCFGD. A phosphotyrosine; by autocatalysis mark is found at Tyr-691 and Tyr-707. Catalysis depends on Asp-777, which acts as the Proton acceptor. Residue Arg-781 coordinates ATP. Residues Asn-782 and Asp-795 each contribute to the Mg(2+) site. 2 positions are modified to phosphotyrosine; by autocatalysis: Tyr-808 and Tyr-921. The tract at residues 929 to 976 is disordered; that stretch reads PAAPGPREESSSHVHRLNSVGSHSTATQPLLSSNDVFLDRSSPSHPVV. Residues 947–976 are compositionally biased toward polar residues; the sequence is SVGSHSTATQPLLSSNDVFLDRSSPSHPVV.

This sequence belongs to the protein kinase superfamily. Tyr protein kinase family. CSF-1/PDGF receptor subfamily. Post-translationally, ubiquitinated. Rapidly ubiquitinated after autophosphorylation induced by kitlg/scf binding, leading to internalization and degradation. Autophosphorylated on tyrosine residues. Phosphorylated tyrosine residues are important for interaction with specific binding partners. In terms of tissue distribution, expressed in cells of the neural crest-melanocyte lineage. In the embryo, also expressed in mesodermal cells that give rise to hematopoietic precursors, notochord, neural crest-derived cells of the branchial arches, pineal gland, retina and mechanoreceptive sensory cells of lateral line neuromasts. Not detected in primordial germ cells or larval gut.

The protein resides in the cell membrane. The enzyme catalyses L-tyrosyl-[protein] + ATP = O-phospho-L-tyrosyl-[protein] + ADP + H(+). Its function is as follows. Tyrosine-protein kinase that acts as a cell-surface receptor for the cytokine kitlg/scf and plays a role in the regulation of cell survival and proliferation, hematopoiesis, stem cell maintenance, gametogenesis, and in mast cell development, migration and function. Required for the migration of cells in the melanocyte lineage and the survival of embryonic melanocytes. Required for the differentiation of some, but not all, melanocytes. Not essential for hematopoiesis or primordial germ cell development. The polypeptide is Mast/stem cell growth factor receptor kita (kita) (Danio rerio (Zebrafish)).